The chain runs to 227 residues: Ribonuclease S-5 (227 aa).

Positions 1–27 (MGITGMVYVVTMVFLLIVLILSSSTVG) are cleaved as a signal peptide. Gln36 contacts RNA. A disulfide bridge connects residues Cys42 and Cys49. Asn45 carries an N-linked (GlcNAc...) asparagine glycan. Residues His60, 97 to 98 (NV), Phe107, 110 to 111 (KE), and 114 to 115 (KH) contribute to the RNA site. The active-site Proton donor is the His60. An intrachain disulfide couples Cys75 to Cys118. Residue Glu111 is part of the active site. Catalysis depends on His115, which acts as the Proton acceptor. An N-linked (GlcNAc...) asparagine glycan is attached at Asn143. 2 disulfides stabilise this stretch: Cys182-Cys220 and Cys197-Cys208.

The protein belongs to the RNase T2 family. N-glycan at Asn-45 consists of disaccharide (GlcNAc-GlcNAc). N-linked core structure at Asn-143 contains xylose.

It carries out the reaction a ribonucleotidyl-ribonucleotide-RNA + H2O = a 3'-end 3'-phospho-ribonucleotide-RNA + a 5'-end dephospho-ribonucleoside-RNA + H(+). Functionally, self-incompatibility (SI) is the inherited ability of a flowering plant to prevent self-fertilization by discriminating between self and non-self pollen during pollination. In many species, self-incompatibility is controlled by the single, multiallelic locus S. The sequence is that of Ribonuclease S-5 from Pyrus pyrifolia (Chinese pear).